A 358-amino-acid polypeptide reads, in one-letter code: Probable RNA methyltransferase MXAN_6459 (358 aa).

E92 acts as the Proton acceptor in catalysis. Residues 99–327 (FDEKYVICVS…PVARRYSGGK (229 aa)) enclose the Radical SAM core domain. A disulfide bridge connects residues C106 and C333. C113, C117, and C120 together coordinate [4Fe-4S] cluster. Residues 160 to 161 (GE), S192, 215 to 217 (SVT), and D289 each bind S-adenosyl-L-methionine. C333 acts as the S-methylcysteine intermediate in catalysis.

Belongs to the radical SAM superfamily. RlmN family. It depends on [4Fe-4S] cluster as a cofactor.

Its subcellular location is the cytoplasm. The polypeptide is Probable RNA methyltransferase MXAN_6459 (Myxococcus xanthus (strain DK1622)).